A 501-amino-acid polypeptide reads, in one-letter code: Lysine--tRNA ligase (501 aa).

Positions 411 and 418 each coordinate Mg(2+).

This sequence belongs to the class-II aminoacyl-tRNA synthetase family. Homodimer. It depends on Mg(2+) as a cofactor.

Its subcellular location is the cytoplasm. It catalyses the reaction tRNA(Lys) + L-lysine + ATP = L-lysyl-tRNA(Lys) + AMP + diphosphate. In Pseudomonas aeruginosa (strain ATCC 15692 / DSM 22644 / CIP 104116 / JCM 14847 / LMG 12228 / 1C / PRS 101 / PAO1), this protein is Lysine--tRNA ligase.